Reading from the N-terminus, the 313-residue chain is N-acetyl-gamma-glutamyl-phosphate reductase (313 aa).

The active site involves cysteine 117.

Belongs to the NAGSA dehydrogenase family. Type 2 subfamily.

The protein resides in the cytoplasm. It catalyses the reaction N-acetyl-L-glutamate 5-semialdehyde + phosphate + NADP(+) = N-acetyl-L-glutamyl 5-phosphate + NADPH + H(+). The protein operates within amino-acid biosynthesis; L-arginine biosynthesis; N(2)-acetyl-L-ornithine from L-glutamate: step 3/4. Its function is as follows. Catalyzes the NADPH-dependent reduction of N-acetyl-5-glutamyl phosphate to yield N-acetyl-L-glutamate 5-semialdehyde. This is N-acetyl-gamma-glutamyl-phosphate reductase from Burkholderia cenocepacia (strain HI2424).